A 426-amino-acid polypeptide reads, in one-letter code: Serine--tRNA ligase (426 aa).

233-235 (TSE) is an L-serine binding site. 264 to 266 (RAE) contacts ATP. Residue Glu-287 coordinates L-serine. Residue 351 to 354 (EISS) coordinates ATP. Ser-387 contributes to the L-serine binding site.

It belongs to the class-II aminoacyl-tRNA synthetase family. Type-1 seryl-tRNA synthetase subfamily. As to quaternary structure, homodimer. The tRNA molecule binds across the dimer.

Its subcellular location is the cytoplasm. The enzyme catalyses tRNA(Ser) + L-serine + ATP = L-seryl-tRNA(Ser) + AMP + diphosphate + H(+). It catalyses the reaction tRNA(Sec) + L-serine + ATP = L-seryl-tRNA(Sec) + AMP + diphosphate + H(+). Its pathway is aminoacyl-tRNA biosynthesis; selenocysteinyl-tRNA(Sec) biosynthesis; L-seryl-tRNA(Sec) from L-serine and tRNA(Sec): step 1/1. In terms of biological role, catalyzes the attachment of serine to tRNA(Ser). Is also able to aminoacylate tRNA(Sec) with serine, to form the misacylated tRNA L-seryl-tRNA(Sec), which will be further converted into selenocysteinyl-tRNA(Sec). The protein is Serine--tRNA ligase of Stenotrophomonas maltophilia (strain K279a).